We begin with the raw amino-acid sequence, 155 residues long: Large ribosomal subunit protein eL24 (155 aa).

The segment at 92 to 155 (AKRNMKPEVR…KAAPRVGGKR (64 aa)) is disordered. The span at 96 to 117 (MKPEVRKAQREQAIKQAKEQKK) shows a compositional bias: basic and acidic residues. A compositionally biased stretch (low complexity) spans 124–133 (KTTAPPTKGK).

It belongs to the eukaryotic ribosomal protein eL24 family.

The chain is Large ribosomal subunit protein eL24 (RpL24) from Plutella xylostella (Diamondback moth).